The following is a 150-amino-acid chain: Cytochrome c oxidase subunit 5A, mitochondrial (150 aa).

Residues 1 to 41 (MLGAALRRCAVAATTRAGPRGLLHSARTPGPAAAIQSVRCY) constitute a mitochondrion transit peptide. Positions 2–17 (LGAALRRCAVAATTRA) match the SIFI-degron motif. N6-acetyllysine occurs at positions 87 and 113. T141 carries the post-translational modification Phosphothreonine.

The protein belongs to the cytochrome c oxidase subunit 5A family. As to quaternary structure, component of the cytochrome c oxidase (complex IV, CIV), a multisubunit enzyme composed of 14 subunits. The complex is composed of a catalytic core of 3 subunits MT-CO1, MT-CO2 and MT-CO3, encoded in the mitochondrial DNA, and 11 supernumerary subunits COX4I, COX5A, COX5B, COX6A, COX6B, COX6C, COX7A, COX7B, COX7C, COX8 and NDUFA4, which are encoded in the nuclear genome. The complex exists as a monomer or a dimer and forms supercomplexes (SCs) in the inner mitochondrial membrane with NADH-ubiquinone oxidoreductase (complex I, CI) and ubiquinol-cytochrome c oxidoreductase (cytochrome b-c1 complex, complex III, CIII), resulting in different assemblies (supercomplex SCI(1)III(2)IV(1) and megacomplex MCI(2)III(2)IV(2)). Interacts with AFG1L. Interacts with RAB5IF. In terms of processing, in response to mitochondrial stress, the precursor protein is ubiquitinated by the SIFI complex in the cytoplasm before mitochondrial import, leading to its degradation. Within the SIFI complex, UBR4 initiates ubiquitin chain that are further elongated or branched by KCMF1.

The protein resides in the mitochondrion inner membrane. It functions in the pathway energy metabolism; oxidative phosphorylation. In terms of biological role, component of the cytochrome c oxidase, the last enzyme in the mitochondrial electron transport chain which drives oxidative phosphorylation. The respiratory chain contains 3 multisubunit complexes succinate dehydrogenase (complex II, CII), ubiquinol-cytochrome c oxidoreductase (cytochrome b-c1 complex, complex III, CIII) and cytochrome c oxidase (complex IV, CIV), that cooperate to transfer electrons derived from NADH and succinate to molecular oxygen, creating an electrochemical gradient over the inner membrane that drives transmembrane transport and the ATP synthase. Cytochrome c oxidase is the component of the respiratory chain that catalyzes the reduction of oxygen to water. Electrons originating from reduced cytochrome c in the intermembrane space (IMS) are transferred via the dinuclear copper A center (CU(A)) of subunit 2 and heme A of subunit 1 to the active site in subunit 1, a binuclear center (BNC) formed by heme A3 and copper B (CU(B)). The BNC reduces molecular oxygen to 2 water molecules using 4 electrons from cytochrome c in the IMS and 4 protons from the mitochondrial matrix. This chain is Cytochrome c oxidase subunit 5A, mitochondrial (COX5A), found in Pan troglodytes (Chimpanzee).